The chain runs to 105 residues: Heat shock protein HspQ (105 aa).

Residues 77-105 (MRDEHPEQPSMDELARTIRKQLQAPRLRN) are disordered.

It belongs to the HspQ family.

The protein resides in the cytoplasm. In terms of biological role, involved in the degradation of certain denaturated proteins, including DnaA, during heat shock stress. The protein is Heat shock protein HspQ of Salmonella arizonae (strain ATCC BAA-731 / CDC346-86 / RSK2980).